Consider the following 253-residue polypeptide: Oxidoreductase AOL_s00215g277 (253 aa).

A helical membrane pass occupies residues 181 to 203 (FFGYWLTVILGYYIGSLLGYQPF).

Belongs to the oxidoreductase OpS7 family.

It is found in the membrane. Its pathway is secondary metabolite biosynthesis; terpenoid biosynthesis. Functionally, oxidoreductase; part of the gene cluster that mediates the biosynthesis of sesquiterpenyl epoxy-cyclohexenoids (SECs) such as anthrobotrisins and arthrosporols, metabolites that possess a novel hybrid carbon skeleton consisting of a polyketide-derived epoxycyclohexenol combined with a terpenoid-derived monocyclic sesquiterpenol substructure (PKS-PTS hybrid). The SEC pathway plays an important role for fungal soil colonization via decreasing fungal nematode-capturing ability. Within the pathway, the oxidoreductase AOL_s00215g277 seems to play a role in the farnesylation step of toluquinol to produce farnesyl hydroquinone, the hybrid precursor for biosynthesis of SECs. The pathway begins with the biosynthesis of 6-methylsalicylic acid (6-MSA), the first precursor of the polyketide-derived epoxycyclohexenol in arthrosporols, by the polyketide synthase (PKS) AOL_s00215g283 via condensation of 1 acetate and 3 malonate units. The 6-methylsalicylic acid decarboxylase AOL_s00215g281 then catalyzes the decarboxylation of 6-methylsalicylic acid to yield m-cresol. The cytochrome P450 monooxygenase AOL_s00215g282 further oxidizes m-cresol to yield toluquinol. With the assistance of the oxidoreductase AOL_s00215g277, the polyprenyl transferase AOL_s00215g276 catalyzes the farnesylation of toluquinol to produce farnesyl hydroquinone, the hybrid precursor for biosynthesis of SECs. Farnesyl hydroquinone undergoes epoxidation and then subsequent dehydrogenation to form farnesyl epoxy-quinone, the first and simplest SEC. The cytochrome P450 monooxygenase AOL_s00215g278 and the FAD-dependent monooxygenase AOL_s00215g279 might be involved in the oxygenation of the phenol moiety, most likely in the epoxy formation. The cytochrome P450 monooxygenases AOL_s00215g274 and AOL_s00215g280 are involved in specific regional ketone reductions at respectively C-4 and C-1 of farnesyl epoxy-quinone PubMed:33823587. In Arthrobotrys oligospora (strain ATCC 24927 / CBS 115.81 / DSM 1491) (Nematode-trapping fungus), this protein is Oxidoreductase AOL_s00215g277.